A 106-amino-acid polypeptide reads, in one-letter code: SDO1-like protein C21C3.19 (106 aa).

Belongs to the SDO1-like family.

Its subcellular location is the cytoplasm. The protein resides in the nucleus. Its function is as follows. May play a role in RNA metabolism. The protein is SDO1-like protein C21C3.19 of Schizosaccharomyces pombe (strain 972 / ATCC 24843) (Fission yeast).